The sequence spans 357 residues: Putative ankyrin repeat protein L42 (357 aa).

ANK repeat units follow at residues 34–63, 86–115, 116–145, 147–175, 176–205, 206–235, 237–265, 267–294, and 301–331; these read SCKQFIGLVCILTNNLNLLNLLVKKGNLKF, EQNECLKMSCIHGCLEILKYLISIGVDFRM, NDDEPLMLAIENGHLKIVQFLYSKRVNIRA, NNRPLVLSCEKGYINIVNFLLDKKASFVS, KQNEVFSTACGFGQMDIVKLLVEKGADINV, GKIPPIRAAAAGGHLNVIEHLVNKGASINK, SVDSLFSAAFYGHLNIVKYLLGYISEVNI, YYAFEKACINGHIDIVQYLFSENIITKD, and NTRYLFYHTIRNKHKHIIKFLIENNIFDKDK.

The polypeptide is Putative ankyrin repeat protein L42 (Acanthamoeba polyphaga (Amoeba)).